The following is a 331-amino-acid chain: Ketol-acid reductoisomerase (NADP(+)) (331 aa).

Residues 2–182 enclose the KARI N-terminal Rossmann domain; sequence AQLFYDSDAD…GGTRAGILET (181 aa). Residues 25–28, Ser-51, Ser-53, and 83–86 contribute to the NADP(+) site; these read YGSQ and DEFQ. His-108 is a catalytic residue. Gly-134 serves as a coordination point for NADP(+). Residues 183–328 form the KARI C-terminal knotted domain; that stretch reads NFKEETETDL…KGLRSMFSWL (146 aa). Residues Asp-191, Glu-195, Glu-227, and Glu-231 each coordinate Mg(2+). Residue Ser-252 coordinates substrate.

This sequence belongs to the ketol-acid reductoisomerase family. Mg(2+) is required as a cofactor.

It carries out the reaction (2R)-2,3-dihydroxy-3-methylbutanoate + NADP(+) = (2S)-2-acetolactate + NADPH + H(+). The catalysed reaction is (2R,3R)-2,3-dihydroxy-3-methylpentanoate + NADP(+) = (S)-2-ethyl-2-hydroxy-3-oxobutanoate + NADPH + H(+). The protein operates within amino-acid biosynthesis; L-isoleucine biosynthesis; L-isoleucine from 2-oxobutanoate: step 2/4. It functions in the pathway amino-acid biosynthesis; L-valine biosynthesis; L-valine from pyruvate: step 2/4. Involved in the biosynthesis of branched-chain amino acids (BCAA). Catalyzes an alkyl-migration followed by a ketol-acid reduction of (S)-2-acetolactate (S2AL) to yield (R)-2,3-dihydroxy-isovalerate. In the isomerase reaction, S2AL is rearranged via a Mg-dependent methyl migration to produce 3-hydroxy-3-methyl-2-ketobutyrate (HMKB). In the reductase reaction, this 2-ketoacid undergoes a metal-dependent reduction by NADPH to yield (R)-2,3-dihydroxy-isovalerate. In Parasynechococcus marenigrum (strain WH8102), this protein is Ketol-acid reductoisomerase (NADP(+)).